Here is a 212-residue protein sequence, read N- to C-terminus: Thymidylate kinase (212 aa).

Position 10–17 (10–17) interacts with ATP; it reads GLEGAGKT.

The protein belongs to the thymidylate kinase family.

The enzyme catalyses dTMP + ATP = dTDP + ADP. Phosphorylation of dTMP to form dTDP in both de novo and salvage pathways of dTTP synthesis. This is Thymidylate kinase from Cronobacter sakazakii (strain ATCC BAA-894) (Enterobacter sakazakii).